A 399-amino-acid polypeptide reads, in one-letter code: S-adenosylmethionine synthase (399 aa).

136-141 lines the ATP pocket; the sequence is GTGSAD.

This sequence belongs to the AdoMet synthase 2 family. Requires Mg(2+) as cofactor.

The enzyme catalyses L-methionine + ATP + H2O = S-adenosyl-L-methionine + phosphate + diphosphate. It participates in amino-acid biosynthesis; S-adenosyl-L-methionine biosynthesis; S-adenosyl-L-methionine from L-methionine: step 1/1. Catalyzes the formation of S-adenosylmethionine from methionine and ATP. This Methanothrix thermoacetophila (strain DSM 6194 / JCM 14653 / NBRC 101360 / PT) (Methanosaeta thermophila) protein is S-adenosylmethionine synthase.